Here is a 100-residue protein sequence, read N- to C-terminus: MEINTELIKKLKKLSNIELSPSEEERIKKDLNALLEYQKILDKIDVEGIEEMVSPIEFSTSILRKDEVESFESRKKIINNFPENKDGFLAVPGIHVNEEE.

Belongs to the GatC family. Heterotrimer of A, B and C subunits.

It catalyses the reaction L-glutamyl-tRNA(Gln) + L-glutamine + ATP + H2O = L-glutaminyl-tRNA(Gln) + L-glutamate + ADP + phosphate + H(+). The catalysed reaction is L-aspartyl-tRNA(Asn) + L-glutamine + ATP + H2O = L-asparaginyl-tRNA(Asn) + L-glutamate + ADP + phosphate + 2 H(+). Functionally, allows the formation of correctly charged Asn-tRNA(Asn) or Gln-tRNA(Gln) through the transamidation of misacylated Asp-tRNA(Asn) or Glu-tRNA(Gln) in organisms which lack either or both of asparaginyl-tRNA or glutaminyl-tRNA synthetases. The reaction takes place in the presence of glutamine and ATP through an activated phospho-Asp-tRNA(Asn) or phospho-Glu-tRNA(Gln). The polypeptide is Aspartyl/glutamyl-tRNA(Asn/Gln) amidotransferase subunit C (Petrotoga mobilis (strain DSM 10674 / SJ95)).